The following is a 131-amino-acid chain: Profilin-1 (131 aa).

Belongs to the profilin family. As to quaternary structure, occurs in many kinds of cells as a complex with monomeric actin in a 1:1 ratio.

The protein resides in the cytoplasm. The protein localises to the cytoskeleton. Its function is as follows. Binds to actin and affects the structure of the cytoskeleton. At high concentrations, profilin prevents the polymerization of actin, whereas it enhances it at low concentrations. By binding to PIP2, it inhibits the formation of IP3 and DG. The protein is Profilin-1 (PRO1) of Ricinus communis (Castor bean).